The chain runs to 356 residues: Heme A synthase (356 aa).

Helical transmembrane passes span 24-44 (IAIW…VGGV), 106-126 (FHRL…VYFM), 139-159 (LLGI…MVMS), 174-194 (AHLG…TGLI), and 214-234 (AWML…VAGI). His-276 is a binding site for heme. 3 helical membrane-spanning segments follow: residues 278–298 (LIAW…KQLS), 309–329 (LLLL…LLSV), and 331–351 (LTFA…ALWV). A heme-binding site is contributed by His-337.

Belongs to the COX15/CtaA family. Type 2 subfamily. As to quaternary structure, interacts with CtaB. The cofactor is heme b.

The protein resides in the cell membrane. It catalyses the reaction Fe(II)-heme o + 2 A + H2O = Fe(II)-heme a + 2 AH2. The protein operates within porphyrin-containing compound metabolism; heme A biosynthesis; heme A from heme O: step 1/1. In terms of biological role, catalyzes the conversion of heme O to heme A by two successive hydroxylations of the methyl group at C8. The first hydroxylation forms heme I, the second hydroxylation results in an unstable dihydroxymethyl group, which spontaneously dehydrates, resulting in the formyl group of heme A. This chain is Heme A synthase, found in Nitrosomonas eutropha (strain DSM 101675 / C91 / Nm57).